We begin with the raw amino-acid sequence, 451 residues long: Metalloprotease MJ0996 (451 aa).

This sequence belongs to the peptidase U62 family.

Its function is as follows. Probable metalloprotease. The chain is Metalloprotease MJ0996 from Methanocaldococcus jannaschii (strain ATCC 43067 / DSM 2661 / JAL-1 / JCM 10045 / NBRC 100440) (Methanococcus jannaschii).